Consider the following 93-residue polypeptide: Small ribosomal subunit protein uS19 (93 aa).

This sequence belongs to the universal ribosomal protein uS19 family.

Functionally, protein S19 forms a complex with S13 that binds strongly to the 16S ribosomal RNA. In Geotalea uraniireducens (strain Rf4) (Geobacter uraniireducens), this protein is Small ribosomal subunit protein uS19.